The chain runs to 153 residues: Large ribosomal subunit protein uL30 (153 aa).

It belongs to the universal ribosomal protein uL30 family. In terms of assembly, part of the 50S ribosomal subunit.

The chain is Large ribosomal subunit protein uL30 from Metallosphaera sedula (strain ATCC 51363 / DSM 5348 / JCM 9185 / NBRC 15509 / TH2).